Reading from the N-terminus, the 168-residue chain is uncharacterized protein (168 aa).

2 4Fe-4S ferredoxin-type domains span residues 48–78 (KIPK…MIPI) and 91–122 (KIPK…ISPI). [4Fe-4S] cluster-binding residues include Cys-58, Cys-61, Cys-64, Cys-68, Cys-100, Cys-103, Cys-106, and Cys-110.

This is an uncharacterized protein from Methanocaldococcus jannaschii (strain ATCC 43067 / DSM 2661 / JAL-1 / JCM 10045 / NBRC 100440) (Methanococcus jannaschii).